The following is a 272-amino-acid chain: 4-hydroxy-tetrahydrodipicolinate reductase (272 aa).

NAD(+) is bound by residues 12–17 (GAAGRM) and E38. Residue R39 coordinates NADP(+). Residues 102 to 104 (GTT) and 126 to 129 (SGNM) contribute to the NAD(+) site. H160 acts as the Proton donor/acceptor in catalysis. Residue H161 participates in (S)-2,3,4,5-tetrahydrodipicolinate binding. K164 (proton donor) is an active-site residue. 170 to 171 (GT) lines the (S)-2,3,4,5-tetrahydrodipicolinate pocket.

The protein belongs to the DapB family.

The protein localises to the cytoplasm. It carries out the reaction (S)-2,3,4,5-tetrahydrodipicolinate + NAD(+) + H2O = (2S,4S)-4-hydroxy-2,3,4,5-tetrahydrodipicolinate + NADH + H(+). It catalyses the reaction (S)-2,3,4,5-tetrahydrodipicolinate + NADP(+) + H2O = (2S,4S)-4-hydroxy-2,3,4,5-tetrahydrodipicolinate + NADPH + H(+). The protein operates within amino-acid biosynthesis; L-lysine biosynthesis via DAP pathway; (S)-tetrahydrodipicolinate from L-aspartate: step 4/4. Catalyzes the conversion of 4-hydroxy-tetrahydrodipicolinate (HTPA) to tetrahydrodipicolinate. In Sinorhizobium fredii (strain NBRC 101917 / NGR234), this protein is 4-hydroxy-tetrahydrodipicolinate reductase.